Reading from the N-terminus, the 132-residue chain is MFLTMLKSKIHRATVTESNLNYMGSITIDEELMEAADILPNEKVQVVNNNNGARFETYVIKGPRGSGVICLNGAAARLVQPGDLVIIISYAIMDAGEARTYRPAVVMVDGRNKIVEVRQGEAHGPAGADTCP.

Catalysis depends on S25, which acts as the Schiff-base intermediate with substrate; via pyruvic acid. At S25 the chain carries Pyruvic acid (Ser). Substrate is bound at residue T57. Y58 functions as the Proton donor in the catalytic mechanism. A substrate-binding site is contributed by 73–75 (GAA).

Belongs to the PanD family. Heterooctamer of four alpha and four beta subunits. It depends on pyruvate as a cofactor. In terms of processing, is synthesized initially as an inactive proenzyme, which is activated by self-cleavage at a specific serine bond to produce a beta-subunit with a hydroxyl group at its C-terminus and an alpha-subunit with a pyruvoyl group at its N-terminus.

The protein resides in the cytoplasm. The catalysed reaction is L-aspartate + H(+) = beta-alanine + CO2. The protein operates within cofactor biosynthesis; (R)-pantothenate biosynthesis; beta-alanine from L-aspartate: step 1/1. Its function is as follows. Catalyzes the pyruvoyl-dependent decarboxylation of aspartate to produce beta-alanine. In Pelotomaculum thermopropionicum (strain DSM 13744 / JCM 10971 / SI), this protein is Aspartate 1-decarboxylase.